We begin with the raw amino-acid sequence, 177 residues long: UPF0251 protein Cag_0886 (177 aa).

A disordered region spans residues 147 to 177 (GGCLSDEESDEQENEQRTVGYPESEEELEIE).

This sequence belongs to the UPF0251 family.

The polypeptide is UPF0251 protein Cag_0886 (Chlorobium chlorochromatii (strain CaD3)).